We begin with the raw amino-acid sequence, 465 residues long: Botryococcus squalene synthase (465 aa).

NADP(+) is bound by residues R48 and R73. Mg(2+) contacts are provided by D76, E79, and D80. R215, K315, and R317 together coordinate NADP(+). 2 helical membrane-spanning segments follow: residues 395–415 and 429–449; these read AIRL…FNLG and ILDL…LLVL.

The protein belongs to the phytoene/squalene synthase family.

It localises to the membrane. The enzyme catalyses presqualene diphosphate + NADPH + H(+) = squalene + diphosphate + NADP(+). In terms of biological role, produces squalene when coexpressed with SSL-1 and bisfarnesyl ether and a very small amount of squalene when incubated alone in the presence of NADPH. The sequence is that of Botryococcus squalene synthase (SSL-2) from Botryococcus braunii (Green alga).